Here is a 266-residue protein sequence, read N- to C-terminus: Apolipoprotein A-I (266 aa).

The signal sequence occupies residues 1–18 (MKAVVLTLAVLFLTGSQA). 2 tandem repeats follow at residues 67-88 (LKLL…EQLG) and 89-110 (PVTQ…QEMN). Residues 67–266 (LKLLDNWDSL…EEASKKLNAQ (200 aa)) are 10 X approximate tandem repeats. Met-109 carries the post-translational modification Methionine sulfoxide. Residues 111–121 (KDVEEMKTKVQ) form a 3; half-length repeat. Tandem repeats lie at residues 122–143 (PYLD…QKVE), 144–165 (PLGS…EKLS), 166–187 (PLGE…TQLA), 188–209 (PYSE…ESGG), and 210–231 (ASLA…EKAK). The 9; half-length repeat unit spans residues 232-242 (PALEDLRQGLL). Repeat 10 spans residues 243 to 266 (PVLESFKVSLLSALEEASKKLNAQ).

This sequence belongs to the apolipoprotein A1/A4/E family. As to quaternary structure, homodimer. Interacts with APOA1BP and CLU. Component of a sperm activating protein complex (SPAP), consisting of APOA1, an immunoglobulin heavy chain, an immunoglobulin light chain and albumin. Interacts with NDRG1. Interacts with SCGB3A2. Interacts with NAXE and YJEFN3. Glycosylated. Post-translationally, palmitoylated. In terms of processing, phosphorylation sites are present in the extracellular medium. In terms of tissue distribution, major protein of plasma HDL, also found in chylomicrons.

The protein resides in the secreted. Functionally, participates in the reverse transport of cholesterol from tissues to the liver for excretion by promoting cholesterol efflux from tissues and by acting as a cofactor for the lecithin cholesterol acyltransferase (LCAT). As part of the SPAP complex, activates spermatozoa motility. The chain is Apolipoprotein A-I (APOA1) from Carlito syrichta (Philippine tarsier).